A 93-amino-acid polypeptide reads, in one-letter code: Alpha-defensin 9 (93 aa).

An N-terminal signal peptide occupies residues 1 to 19 (MKTLVLLSALVLLAFQVQA). Positions 20 to 58 (DPIQNTDEETKTEEQPGEEDQAVSVSFGDPEGSSLQEES) are excised as a propeptide. The tract at residues 23 to 56 (QNTDEETKTEEQPGEEDQAVSVSFGDPEGSSLQE) is disordered. Intrachain disulfides connect C64–C92, C66–C81, and C71–C91.

The protein belongs to the alpha-defensin family. In terms of tissue distribution, paneth cells of the small bowel.

It localises to the secreted. Its function is as follows. Probably contributes to the antimicrobial barrier function of the small bowel mucosa. The chain is Alpha-defensin 9 (Defa9) from Mus musculus (Mouse).